The chain runs to 191 residues: Fe/S biogenesis protein NfuA (191 aa).

[4Fe-4S] cluster contacts are provided by Cys149 and Cys152.

It belongs to the NfuA family. Homodimer. It depends on [4Fe-4S] cluster as a cofactor.

Functionally, involved in iron-sulfur cluster biogenesis. Binds a 4Fe-4S cluster, can transfer this cluster to apoproteins, and thereby intervenes in the maturation of Fe/S proteins. Could also act as a scaffold/chaperone for damaged Fe/S proteins. This is Fe/S biogenesis protein NfuA from Cronobacter sakazakii (strain ATCC BAA-894) (Enterobacter sakazakii).